The primary structure comprises 326 residues: Trans-L-3-hydroxyproline dehydratase (326 aa).

C80 functions as the Proton acceptor in the catalytic mechanism. Substrate is bound by residues 81–82 (GH), D241, and 246–247 (GS).

This sequence belongs to the proline racemase family. Homodimer.

The catalysed reaction is trans-3-hydroxy-L-proline = 1-pyrroline-2-carboxylate + H2O. Its function is as follows. Catalyzes the dehydration of trans-3-hydroxy-L-proline to delta-1-pyrroline-2-carboxylate (Pyr2C). This chain is Trans-L-3-hydroxyproline dehydratase (l3hypdh), found in Saccoglossus kowalevskii (Acorn worm).